The primary structure comprises 512 residues: Immunoglobulin delta heavy chain (512 aa).

Ig-like domains lie at 1–97 and 135–227; these read RLQL…MYYC and PDVF…KEIF. Residues 1–129 form a variable (V) domain, involved in antigen recognition region; sequence RLQLQESGPG…GQGTTVHVSS (129 aa). Disulfide bonds link C22–C97 and C157–C213. Positions 130-512 are constant (C) domain; it reads APTKAPDVFP…VSYVTDHGPM (383 aa). Residues 225–296 form a disordered region; sequence EIFRWPESPK…TPECPSHTQP (72 aa). Over residues 235–247 the composition is skewed to polar residues; that stretch reads AQASSVPTAQPQA. O-linked (GalNAc...) serine glycosylation occurs at S238. Residues T255, T256, T260, and T261 are each glycosylated (O-linked (GalNAc...) threonine). The segment covering 267–287 has biased composition (basic and acidic residues); that stretch reads GGEEKKKEKEKEEQEERETKT. Ig-like domains are found at residues 304-392 and 396-502; these read PAVQ…RLMA and PAAQ…RSLE. 2 disulfide bridges follow: C319/C378 and C423/C484. N354, N445, and N496 each carry an N-linked (GlcNAc...) asparagine glycan.

Immunoglobulins are composed of two identical heavy chains and two identical light chains; disulfide-linked. An IgD molecule contains thus a delta heavy chain combined with either a kappa or a lambda light chains. Kappa light chains are found predominantly on the membrane IgD (mIgD) form and lambda on the secreted IgD (sIgD) form, this fact is poorly understood. Membrane-bound IgD molecules are non-covalently associated with a heterodimer of CD79A and CD79B.

Its subcellular location is the secreted. It localises to the cell membrane. Functionally, immunoglobulins, also known as antibodies, are membrane-bound or secreted glycoproteins produced by B lymphocytes. In the recognition phase of humoral immunity, the membrane-bound immunoglobulins serve as receptors which, upon binding of a specific antigen, trigger the clonal expansion and differentiation of B lymphocytes into immunoglobulins-secreting plasma cells. Secreted immunoglobulins mediate the effector phase of humoral immunity, which results in the elimination of bound antigens. The antigen binding site is formed by the variable domain of one heavy chain, together with that of its associated light chain. Thus, each immunoglobulin has two antigen binding sites with remarkable affinity for a particular antigen. The variable domains are assembled by a process called V-(D)-J rearrangement and can then be subjected to somatic hypermutations which, after exposure to antigen and selection, allow affinity maturation for a particular antigen. IgD is the major antigen receptor isotype on the surface of most peripheral B cells, where it is coexpressed with IgM. The membrane-bound IgD (mIgD) induces the phosphorylation of CD79A and CD79B by the Src family of protein tyrosine kinases. Soluble IgD (sIgD) concentration in serum is below those of IgG, IgA, and IgM but much higher than that of IgE. IgM and IgD molecules present on B cells have identical V regions and antigen-binding sites. After the antigen binds to the B cell receptor, the secreted form sIgD is shut off. IgD is a potent inducer of TNF, IL1B, and IL1RN. IgD also induces release of IL6, IL10, and LIF from peripheral blood mononuclear cells. Monocytes seem to be the main producers of cytokines in vitro in the presence of IgD. This chain is Immunoglobulin delta heavy chain, found in Homo sapiens (Human).